We begin with the raw amino-acid sequence, 166 residues long: Mitochondrial fission process protein 1 (166 aa).

2 consecutive transmembrane segments (helical) span residues 34-54 (SLVPAAVVWLSYGVASSYVLA) and 80-100 (AVVDTFVWQALASVAIPGFTI). Lysine 123 is modified (N6-succinyllysine). Residues 129–149 (LGLLTIPIIIHPIDRSVDFLL) form a helical membrane-spanning segment.

This sequence belongs to the MTFP1 family.

Its subcellular location is the mitochondrion inner membrane. In terms of biological role, involved in the mitochondrial division probably by regulating membrane fission. Loss-of-function induces the release of cytochrome c, which activates the caspase cascade and leads to apoptosis. The sequence is that of Mitochondrial fission process protein 1 (MTFP1) from Homo sapiens (Human).